A 303-amino-acid polypeptide reads, in one-letter code: RELT-like protein 2 (303 aa).

Residues 15 to 35 form a helical membrane-spanning segment; the sequence is LYMLFLLVLVFFLMGLVGFMI. Disordered stretches follow at residues 47-68, 135-214, and 249-303; these read RTSRGSEPDDAQLQPPEDDDVN, CSRS…QPRT, and PCTL…AGGM. Phosphoserine is present on serine 52. 2 stretches are compositionally biased toward basic and acidic residues: residues 148–158 and 172–188; these read RSKEGKSRPRP and THIEKRYGLHEHRDGSP. Residues 194–212 are compositionally biased toward gly residues; it reads GSGGGQEPGGSQAAGGGQP. A compositionally biased stretch (polar residues) spans 274–295; that stretch reads GLSSQEANGQPTKLDTSGQQES.

This sequence belongs to the RELT family. In terms of assembly, interacts with RELT, RELL1, OXSR1, PLSCR1 and TRAF2.

The protein localises to the cell membrane. In terms of biological role, induces activation of MAPK14/p38 cascade, when overexpressed. Induces apoptosis, when overexpressed. The sequence is that of RELT-like protein 2 (Rell2) from Mus musculus (Mouse).